The chain runs to 151 residues: Putative membrane protein ORF10 (151 aa).

Helical transmembrane passes span 7–23 and 107–123; these read LCLAFGVTLIVIVGVVV and GLVAAFNGFWLSFIIMY.

The protein resides in the membrane. This chain is Putative membrane protein ORF10 (ORF10), found in Ictalurid herpesvirus 1 (strain Auburn) (IcHV-1).